The following is a 29-amino-acid chain: Snake venom metalloproteinase bothrolysin (29 aa).

Residues 6-29 form the Peptidase M12B domain; sequence RYIELFLVVDSGMFMKYNGNSDKI. Ca(2+) is bound at residue Glu-9.

The protein belongs to the venom metalloproteinase (M12B) family. Zn(2+) is required as a cofactor. As to expression, expressed by the venom gland.

The protein localises to the secreted. The catalysed reaction is Cleavage of 4-Gln-|-His-5, 9-Ser-|-His-10 and 14-Ala-|-Leu-15 of insulin B chain and Pro-|-Phe of angiotensin I.. In terms of biological role, snake venom zinc metalloproteinase that impairs hemostasis in the envenomed animal. The sequence is that of Snake venom metalloproteinase bothrolysin from Bothrops jararaca (Jararaca).